The primary structure comprises 1312 residues: DNA repair protein RAD50.L (1312 aa).

ATP is bound by residues Arg-13, Asn-38, Gly-39, Gly-41, Lys-42, Thr-43, Thr-44, Val-67, Asp-69, and Gln-159. Thr-43 contacts Mg(2+). Gln-159 is a binding site for Mg(2+). Coiled-coil stretches lie at residues 203–342, 415–558, and 587–628; these read VREY…LNRE, LREF…IKSR, and INQT…FEEK. Residues 635–734 form the Zinc-hook domain; that stretch reads SQDFDSDLSR…RKDDMMELKP (100 aa). 2 residues coordinate Zn(2+): Cys-681 and Cys-684. Residues 712–1070 are a coiled coil; sequence LKSAEGELKR…ENKSESLKTN (359 aa).

The protein belongs to the SMC family. RAD50 subfamily. As to quaternary structure, component of the MRN complex composed of two heterodimers RAD50 and MRE11 associated with a single NBN. Requires Zn(2+) as cofactor.

The protein resides in the nucleus. It is found in the chromosome. It localises to the telomere. The catalysed reaction is ATP + H2O = ADP + phosphate + H(+). Component of the MRN complex, which plays a central role in double-strand break (DSB) repair, DNA recombination, maintenance of telomere integrity and meiosis. The MRN complex is involved in the repair of DNA double-strand breaks (DSBs) via homologous recombination (HR), an error-free mechanism which primarily occurs during S and G2 phases. The complex (1) mediates the end resection of damaged DNA, which generates proper single-stranded DNA, a key initial steps in HR, and is (2) required for the recruitment of other repair factors and efficient activation of ATM and ATR upon DNA damage. The MRN complex possesses single-strand endonuclease activity and double-strand-specific 3'-5' exonuclease activity, which are provided by mre11, to initiate end resection, which is required for single-strand invasion and recombination. Within the complex, rad50 is both required to bind DNA ends and hold them in close proximity and regulate the activity of MRE11. Rad50 provides an ATP-dependent control of MRE11 by positioning DNA ends into the mre11 active site: ATP-binding induces a large structural change from an open form with accessible MRE11 nuclease sites into a closed form. The MRN complex is also required for DNA damage signaling via activation of the atm and atr kinases: the nuclease activity of mre11 is not required to activate ATM and ATR. The MRN complex promotes recruitment of topbp1 to DNA damage sites. The MRN complex and rbbp8/CtIP are also required for chromosome alignment during metaphase. This chain is DNA repair protein RAD50.L, found in Xenopus laevis (African clawed frog).